The primary structure comprises 80 residues: uncharacterized protein (80 aa).

This is an uncharacterized protein from Vaccinia virus (strain Western Reserve) (VACV).